We begin with the raw amino-acid sequence, 69 residues long: Guanine nucleotide-binding protein G(I)/G(S)/G(O) subunit gamma-T2 (69 aa).

At Cys66 the chain carries Cysteine methyl ester. A lipid anchor (S-farnesyl cysteine) is attached at Cys66. A propeptide spans 67–69 (removed in mature form); it reads LIS.

Belongs to the G protein gamma family. As to quaternary structure, g proteins are composed of 3 units, alpha, beta and gamma. As to expression, retinal cones.

It localises to the cell membrane. Functionally, guanine nucleotide-binding proteins (G proteins) are involved as a modulator or transducer in various transmembrane signaling systems. The beta and gamma chains are required for the GTPase activity, for replacement of GDP by GTP, and for G protein-effector interaction. This is Guanine nucleotide-binding protein G(I)/G(S)/G(O) subunit gamma-T2 (GNGT2) from Homo sapiens (Human).